The sequence spans 277 residues: Caspase-3 (277 aa).

Methionine 1 carries the N-acetylmethionine modification. 2 consecutive propeptides follow at residues 1–9 (MENTENSVD) and 10–28 (SKSI…KSVD). The segment covering 1-10 (MENTENSVDS) has biased composition (polar residues). Residues 1–25 (MENTENSVDSKSIKNSEPKIIHGSK) form a disordered region. An N6-acetyllysine modification is found at lysine 11. Over residues 11–20 (KSIKNSEPKI) the composition is skewed to basic and acidic residues. Serine 26 carries the phosphoserine modification. Residues histidine 121 and cysteine 163 contribute to the active site. Cysteine 163 is modified (S-nitrosocysteine; in inhibited form).

Belongs to the peptidase C14A family. Heterotetramer that consists of two anti-parallel arranged heterodimers, each one formed by a 17 kDa (p17) and a 12 kDa (p12) subunit. Interacts with BIRC6/bruce. Cleavage by granzyme B, caspase-6, caspase-8 and caspase-10 generates the two active subunits. Additional processing of the propeptides is likely due to the autocatalytic activity of the activated protease. Active heterodimers between the small subunit of caspase-7 protease and the large subunit of caspase-3 also occur and vice versa. Post-translationally, S-nitrosylated on its catalytic site cysteine in unstimulated cell lines and denitrosylated upon activation of the Fas apoptotic pathway, associated with an increase in intracellular caspase activity. Fas therefore activates caspase-3 not only by inducing the cleavage of the caspase zymogen to its active subunits, but also by stimulating the denitrosylation of its active site thiol. In terms of processing, ubiquitinated by BIRC6; this activity is inhibited by DIABLO/SMAC.

It is found in the cytoplasm. It catalyses the reaction Strict requirement for an Asp residue at positions P1 and P4. It has a preferred cleavage sequence of Asp-Xaa-Xaa-Asp-|- with a hydrophobic amino-acid residue at P2 and a hydrophilic amino-acid residue at P3, although Val or Ala are also accepted at this position.. With respect to regulation, inhibited by BIRC6; following inhibition of BIRC6-caspase binding by DIABLO/SMAC, BIRC6 is subjected to caspase cleavage, leading to an increase in active caspases. Its function is as follows. Involved in the activation cascade of caspases responsible for apoptosis execution. At the onset of apoptosis, it proteolytically cleaves poly(ADP-ribose) polymerase PARP1 at a '216-Asp-|-Gly-217' bond. Cleaves and activates sterol regulatory element binding proteins (SREBPs) between the basic helix-loop-helix leucine zipper domain and the membrane attachment domain. Cleaves and activates caspase-6, -7 and -9 (CASP6, CASP7 and CASP9, respectively). Cleaves and inactivates interleukin-18 (IL18). Triggers cell adhesion in sympathetic neurons through RET cleavage. Cleaves IL-1 beta between an Asp and an Ala, releasing the mature cytokine which is involved in a variety of inflammatory processes. Cleaves and inhibits serine/threonine-protein kinase AKT1 in response to oxidative stress. Acts as an inhibitor of type I interferon production during virus-induced apoptosis by mediating cleavage of antiviral proteins CGAS, IRF3 and MAVS, thereby preventing cytokine overproduction. Also involved in pyroptosis by mediating cleavage and activation of gasdermin-E (GSDME). Cleaves XRCC4 and phospholipid scramblase proteins XKR4, XKR8 and XKR9, leading to promote phosphatidylserine exposure on apoptotic cell surface. Cleaves BIRC6 following inhibition of BIRC6-caspase binding by DIABLO/SMAC. The protein is Caspase-3 (CASP3) of Saimiri boliviensis boliviensis (Bolivian squirrel monkey).